A 108-amino-acid polypeptide reads, in one-letter code: Urease subunit gamma (108 aa).

It belongs to the urease gamma subunit family. As to quaternary structure, heterotrimer of UreA (gamma), UreB (beta) and UreC (alpha) subunits. Three heterotrimers associate to form the active enzyme.

The protein resides in the cytoplasm. The catalysed reaction is urea + 2 H2O + H(+) = hydrogencarbonate + 2 NH4(+). It functions in the pathway nitrogen metabolism; urea degradation; CO(2) and NH(3) from urea (urease route): step 1/1. This chain is Urease subunit gamma, found in Haloquadratum walsbyi (strain DSM 16790 / HBSQ001).